The chain runs to 125 residues: Small ribosomal subunit protein uS12 (125 aa).

3-methylthioaspartic acid is present on Asp89.

This sequence belongs to the universal ribosomal protein uS12 family. In terms of assembly, part of the 30S ribosomal subunit. Contacts proteins S8 and S17. May interact with IF1 in the 30S initiation complex.

Its function is as follows. With S4 and S5 plays an important role in translational accuracy. In terms of biological role, interacts with and stabilizes bases of the 16S rRNA that are involved in tRNA selection in the A site and with the mRNA backbone. Located at the interface of the 30S and 50S subunits, it traverses the body of the 30S subunit contacting proteins on the other side and probably holding the rRNA structure together. The combined cluster of proteins S8, S12 and S17 appears to hold together the shoulder and platform of the 30S subunit. The protein is Small ribosomal subunit protein uS12 of Clostridium acetobutylicum (strain ATCC 824 / DSM 792 / JCM 1419 / IAM 19013 / LMG 5710 / NBRC 13948 / NRRL B-527 / VKM B-1787 / 2291 / W).